A 139-amino-acid polypeptide reads, in one-letter code: Protein cornichon homolog 4 (139 aa).

Helical transmembrane passes span 5-25 (VFLF…YFII), 57-77 (IVTV…NLPV), and 118-138 (LGFY…ALIN).

Belongs to the cornichon family. As to quaternary structure, interacts with Sec23/24 complex components SEC24B and SEC24D. Interacts with CCR5. Interacts with ADRB2 in the early secretory pathway.

The protein resides in the membrane. It is found in the endoplasmic reticulum. The protein localises to the endoplasmic reticulum-Golgi intermediate compartment. In terms of biological role, involved in G protein-coupled receptors (GPCRs) trafficking from the endoplasmic reticulum to the cell surface; it promotes the exit of GPCRs from the early secretory pathway, likely through interaction with the COPII machinery. The chain is Protein cornichon homolog 4 (Cnih4) from Mus musculus (Mouse).